A 1392-amino-acid chain; its full sequence is DNA-directed RNA polymerase subunit beta (1392 aa).

Residues 1372–1392 (LSSYAEEDPDEGPEALPEAAE) are disordered.

The protein belongs to the RNA polymerase beta chain family. As to quaternary structure, the RNAP catalytic core consists of 2 alpha, 1 beta, 1 beta' and 1 omega subunit. When a sigma factor is associated with the core the holoenzyme is formed, which can initiate transcription.

It carries out the reaction RNA(n) + a ribonucleoside 5'-triphosphate = RNA(n+1) + diphosphate. Functionally, DNA-dependent RNA polymerase catalyzes the transcription of DNA into RNA using the four ribonucleoside triphosphates as substrates. This chain is DNA-directed RNA polymerase subunit beta, found in Sphingopyxis alaskensis (strain DSM 13593 / LMG 18877 / RB2256) (Sphingomonas alaskensis).